A 358-amino-acid polypeptide reads, in one-letter code: Mannonate dehydratase (358 aa).

The protein belongs to the mannonate dehydratase family. Requires Fe(2+) as cofactor. Mn(2+) serves as cofactor.

The catalysed reaction is D-mannonate = 2-dehydro-3-deoxy-D-gluconate + H2O. It participates in carbohydrate metabolism; pentose and glucuronate interconversion. Functionally, catalyzes the dehydration of D-mannonate. This Shouchella clausii (strain KSM-K16) (Alkalihalobacillus clausii) protein is Mannonate dehydratase.